Consider the following 199-residue polypeptide: Proteasome subunit beta 2 (199 aa).

Residues 1–6 (MEKKTG) constitute a propeptide, removed in mature form; by autocatalysis. Catalysis depends on threonine 7, which acts as the Nucleophile.

The protein belongs to the peptidase T1B family. The 20S proteasome core is composed of 14 alpha and 14 beta subunits that assemble into four stacked heptameric rings, resulting in a barrel-shaped structure. The two inner rings, each composed of seven catalytic beta subunits, are sandwiched by two outer rings, each composed of seven alpha subunits. The catalytic chamber with the active sites is on the inside of the barrel. Has a gated structure, the ends of the cylinder being occluded by the N-termini of the alpha-subunits. Is capped at one or both ends by the proteasome regulatory ATPase, PAN.

The protein resides in the cytoplasm. The catalysed reaction is Cleavage of peptide bonds with very broad specificity.. The formation of the proteasomal ATPase PAN-20S proteasome complex, via the docking of the C-termini of PAN into the intersubunit pockets in the alpha-rings, triggers opening of the gate for substrate entry. Interconversion between the open-gate and close-gate conformations leads to a dynamic regulation of the 20S proteasome proteolysis activity. Its function is as follows. Component of the proteasome core, a large protease complex with broad specificity involved in protein degradation. The sequence is that of Proteasome subunit beta 2 from Thermococcus kodakarensis (strain ATCC BAA-918 / JCM 12380 / KOD1) (Pyrococcus kodakaraensis (strain KOD1)).